Consider the following 795-residue polypeptide: Myosin light chain kinase 3 (795 aa).

Ser-155 is modified (phosphoserine). Disordered stretches follow at residues 236-257 (GPGQ…ASEN) and 305-328 (SSGP…GDAL). Ser-351 and Ser-432 each carry phosphoserine. Residues 367–452 (DQIPKGARPF…GPGRTEAGRL (86 aa)) are disordered. In terms of domain architecture, Protein kinase spans 491–746 (VSQHEVLGGG…ATQCLKHEWL (256 aa)). ATP-binding positions include 497–505 (LGGGRFGQV) and Lys-520. Catalysis depends on Asp-612, which acts as the Proton acceptor.

This sequence belongs to the protein kinase superfamily. CAMK Ser/Thr protein kinase family. Mg(2+) serves as cofactor. Phosphorylated on serine residues. In terms of tissue distribution, restricted to cardiomyocytes (at protein level). Down-regulated in heart after experimental myocardial infarction at the protein level; no significant changes at the mRNA level.

The protein localises to the cytoplasm. The catalysed reaction is L-seryl-[myosin light chain] + ATP = O-phospho-L-seryl-[myosin light chain] + ADP + H(+). The enzyme catalyses L-threonyl-[myosin light chain] + ATP = O-phospho-L-threonyl-[myosin light chain] + ADP + H(+). In terms of biological role, kinase that phosphorylates MYL2 in vitro. Has been proposed to be calmodulin-dependent, although MYL2 phosphorylation has also been observed in the presence or absence of calmodulin. Promotes sarcomere formation in cardiomyocytes and increases cardiomyocyte contractility. This Mus musculus (Mouse) protein is Myosin light chain kinase 3 (Mylk3).